We begin with the raw amino-acid sequence, 156 residues long: 3-hydroxyacyl-[acyl-carrier-protein] dehydratase FabZ (156 aa).

Residue His57 is part of the active site.

This sequence belongs to the thioester dehydratase family. FabZ subfamily.

It is found in the cytoplasm. It carries out the reaction a (3R)-hydroxyacyl-[ACP] = a (2E)-enoyl-[ACP] + H2O. Its function is as follows. Involved in unsaturated fatty acids biosynthesis. Catalyzes the dehydration of short chain beta-hydroxyacyl-ACPs and long chain saturated and unsaturated beta-hydroxyacyl-ACPs. This Anaeromyxobacter dehalogenans (strain 2CP-1 / ATCC BAA-258) protein is 3-hydroxyacyl-[acyl-carrier-protein] dehydratase FabZ.